The sequence spans 92 residues: Small ribosomal subunit protein uS17 (92 aa).

The protein belongs to the universal ribosomal protein uS17 family. As to quaternary structure, part of the 30S ribosomal subunit.

In terms of biological role, one of the primary rRNA binding proteins, it binds specifically to the 5'-end of 16S ribosomal RNA. In Wigglesworthia glossinidia brevipalpis, this protein is Small ribosomal subunit protein uS17.